The primary structure comprises 676 residues: Methionine--tRNA ligase (676 aa).

The short motif at 15-25 (PYANGPIHLGH) is the 'HIGH' region element. Positions 146, 149, 159, and 162 each coordinate Zn(2+). A 'KMSKS' region motif is present at residues 332 to 336 (KMSKS). Lysine 335 contacts ATP. The tRNA-binding domain occupies 575-676 (DFAKIDLRIA…EGAQPGMRVK (102 aa)).

This sequence belongs to the class-I aminoacyl-tRNA synthetase family. MetG type 1 subfamily. As to quaternary structure, homodimer. Requires Zn(2+) as cofactor.

Its subcellular location is the cytoplasm. It catalyses the reaction tRNA(Met) + L-methionine + ATP = L-methionyl-tRNA(Met) + AMP + diphosphate. Is required not only for elongation of protein synthesis but also for the initiation of all mRNA translation through initiator tRNA(fMet) aminoacylation. The chain is Methionine--tRNA ligase from Shewanella sp. (strain ANA-3).